The primary structure comprises 228 residues: Phosphoglycolate phosphatase (228 aa).

Catalysis depends on Asp12, which acts as the Nucleophile. Mg(2+)-binding residues include Asp12, Asp14, and Asp177.

Belongs to the HAD-like hydrolase superfamily. CbbY/CbbZ/Gph/YieH family. Mg(2+) is required as a cofactor.

It carries out the reaction 2-phosphoglycolate + H2O = glycolate + phosphate. The protein operates within organic acid metabolism; glycolate biosynthesis; glycolate from 2-phosphoglycolate: step 1/1. Functionally, specifically catalyzes the dephosphorylation of 2-phosphoglycolate. Is involved in the dissimilation of the intracellular 2-phosphoglycolate formed during the DNA repair of 3'-phosphoglycolate ends, a major class of DNA lesions induced by oxidative stress. In Vibrio vulnificus (strain YJ016), this protein is Phosphoglycolate phosphatase.